Consider the following 407-residue polypeptide: Peptidase T (407 aa).

His-82 is a Zn(2+) binding site. Asp-84 is an active-site residue. Asp-143 contributes to the Zn(2+) binding site. Glu-177 serves as the catalytic Proton acceptor. Positions 178, 200, and 382 each coordinate Zn(2+).

It belongs to the peptidase M20B family. Zn(2+) serves as cofactor.

The protein resides in the cytoplasm. The enzyme catalyses Release of the N-terminal residue from a tripeptide.. In terms of biological role, cleaves the N-terminal amino acid of tripeptides. The polypeptide is Peptidase T (Streptococcus pyogenes serotype M1).